The sequence spans 159 residues: MDATFWALIGLIIFLAILAYLKVPGMVGRSLDERADRIKNELEEARTLREEAQQLLAEYHRKRKEAEKEAGDIVASAEREAKALLEDAKRATEEYVARRNKLAEQKIATAEVDAINAVRASAVDLAVAAAGKIVADKVDTKVAGNLFKDALSQVKSNLN.

Residues 1–21 form a helical membrane-spanning segment; sequence MDATFWALIGLIIFLAILAYL.

This sequence belongs to the ATPase B chain family. As to quaternary structure, F-type ATPases have 2 components, F(1) - the catalytic core - and F(0) - the membrane proton channel. F(1) has five subunits: alpha(3), beta(3), gamma(1), delta(1), epsilon(1). F(0) has three main subunits: a(1), b(2) and c(10-14). The alpha and beta chains form an alternating ring which encloses part of the gamma chain. F(1) is attached to F(0) by a central stalk formed by the gamma and epsilon chains, while a peripheral stalk is formed by the delta and b chains.

It localises to the cell inner membrane. Functionally, f(1)F(0) ATP synthase produces ATP from ADP in the presence of a proton or sodium gradient. F-type ATPases consist of two structural domains, F(1) containing the extramembraneous catalytic core and F(0) containing the membrane proton channel, linked together by a central stalk and a peripheral stalk. During catalysis, ATP synthesis in the catalytic domain of F(1) is coupled via a rotary mechanism of the central stalk subunits to proton translocation. Component of the F(0) channel, it forms part of the peripheral stalk, linking F(1) to F(0). The polypeptide is ATP synthase subunit b 2 (Brucella anthropi (strain ATCC 49188 / DSM 6882 / CCUG 24695 / JCM 21032 / LMG 3331 / NBRC 15819 / NCTC 12168 / Alc 37) (Ochrobactrum anthropi)).